Consider the following 98-residue polypeptide: Citrate lyase acyl carrier protein (98 aa).

An O-(phosphoribosyl dephospho-coenzyme A)serine modification is found at serine 14.

The protein belongs to the CitD family. In terms of assembly, oligomer with a subunit composition of (alpha,beta,gamma)6.

It is found in the cytoplasm. Covalent carrier of the coenzyme of citrate lyase. The protein is Citrate lyase acyl carrier protein of Shigella boydii serotype 18 (strain CDC 3083-94 / BS512).